Reading from the N-terminus, the 142-residue chain is ER-derived vesicles protein ERV15 (142 aa).

Residues 1–7 (MSGTGLS) are Cytoplasmic-facing. A helical transmembrane segment spans residues 8-28 (LFVTGLILNCLNSICQIYFTI). At 29-55 (LYGDLEADYINSIELCKRVNRLSVPEA) the chain is on the extracellular side. The chain crosses the membrane as a helical span at residues 56 to 76 (ILQAFISALFLFNGYWFVFLL). Residues 77 to 114 (NVPVLAYNASKVYKKTHLLDATDIFRKLGRCKIECFLK) are Cytoplasmic-facing. The helical transmembrane segment at 115 to 135 (LGFYLLIFFFYFYRMVTALLE) threads the bilayer. Residues 136–142 (NDANLIS) are Extracellular-facing.

This sequence belongs to the cornichon family.

The protein localises to the membrane. The sequence is that of ER-derived vesicles protein ERV15 (ERV15) from Saccharomyces cerevisiae (strain ATCC 204508 / S288c) (Baker's yeast).